Reading from the N-terminus, the 502-residue chain is Xylan O-acetyltransferase 13 (502 aa).

At 1–53 (MWSALFSHLREVHKRSGVKEEKLIMKSPPAAGEAGCHKPQATATNKMTVLQSP) the chain is on the cytoplasmic side. The helical; Signal-anchor for type II membrane protein transmembrane segment at 54–76 (LGLRTILTSLVAFFIVVSSVSLL) threads the bilayer. At 77–502 (FDRGQDAQAQ…EFLYAYIMHK (426 aa)) the chain is on the lumenal side. 4 disulfide bridges follow: cysteine 152–cysteine 203, cysteine 174–cysteine 239, cysteine 183–cysteine 483, and cysteine 399–cysteine 479. Asparagine 153, asparagine 163, asparagine 189, and asparagine 209 each carry an N-linked (GlcNAc...) asparagine glycan. The short motif at 226–228 (GDS) is the GDS motif element. Residue serine 228 is the Nucleophile of the active site. N-linked (GlcNAc...) asparagine glycosylation is found at asparagine 255, asparagine 267, asparagine 372, asparagine 401, and asparagine 442. Aspartate 478 (proton donor) is an active-site residue. A DXXH motif motif is present at residues 478–481 (DCTH). Histidine 481 (proton acceptor) is an active-site residue.

This sequence belongs to the PC-esterase family. TBL subfamily.

It is found in the golgi apparatus membrane. In terms of biological role, xylan acetyltransferase required for 2-O- and 3-O-monoacetylation of xylosyl residues in xylan. Catalyzes the 2-O-acetylation of xylan, followed by nonenzymatic acetyl migration to the O-3 position, resulting in products that are monoacetylated at both O-2 and O-3 positions. The chain is Xylan O-acetyltransferase 13 from Oryza sativa subsp. japonica (Rice).